The sequence spans 203 residues: ATP-dependent Clp protease proteolytic subunit (203 aa).

Serine 107 serves as the catalytic Nucleophile. Histidine 132 is a catalytic residue.

The protein belongs to the peptidase S14 family. Fourteen ClpP subunits assemble into 2 heptameric rings which stack back to back to give a disk-like structure with a central cavity, resembling the structure of eukaryotic proteasomes.

It is found in the cytoplasm. The enzyme catalyses Hydrolysis of proteins to small peptides in the presence of ATP and magnesium. alpha-casein is the usual test substrate. In the absence of ATP, only oligopeptides shorter than five residues are hydrolyzed (such as succinyl-Leu-Tyr-|-NHMec, and Leu-Tyr-Leu-|-Tyr-Trp, in which cleavage of the -Tyr-|-Leu- and -Tyr-|-Trp bonds also occurs).. Cleaves peptides in various proteins in a process that requires ATP hydrolysis. Has a chymotrypsin-like activity. Plays a major role in the degradation of misfolded proteins. In Shewanella loihica (strain ATCC BAA-1088 / PV-4), this protein is ATP-dependent Clp protease proteolytic subunit.